The chain runs to 200 residues: Ribonuclease T2 (200 aa).

Residues Cys17 and Cys22 are joined by a disulfide bond. His32 is a catalytic residue. Cys42 and Cys89 are disulfide-bonded. 2 N-linked (GlcNAc...) asparagine glycosylation sites follow: Asn43 and Asn73. Active-site residues include Glu82 and His86. Asn116 carries N-linked (GlcNAc...) asparagine glycosylation. 2 disulfides stabilise this stretch: Cys152–Cys188 and Cys170–Cys180.

It belongs to the RNase T2 family.

The protein resides in the secreted. It localises to the lysosome lumen. It is found in the endoplasmic reticulum lumen. The protein localises to the mitochondrion intermembrane space. The catalysed reaction is a ribonucleotidyl-ribonucleotide-RNA + H2O = a 3'-end 3'-phospho-ribonucleotide-RNA + a 5'-end dephospho-ribonucleoside-RNA + H(+). It carries out the reaction an adenylyl-uridine-RNA = a 3'-end 2',3'-cyclophospho-AMP-RNA + a 5'-end dephospho-uridine-RNA. It catalyses the reaction a guanylyl-uridine-RNA = a 3'-end 2',3'-cyclophospho-GMP-RNA + a 5'-end dephospho-uridine-RNA. Inhibited by Zn(2+) and Cu(2+). Its function is as follows. Ribonuclease that plays an essential role in innate immune response by recognizing and degrading RNAs from microbial pathogens that are subsequently sensed by TLR8. Cleaves preferentially single-stranded RNA molecules between purine and uridine residues, which critically contributes to the supply of catabolic uridine and the generation of purine-2',3'-cyclophosphate-terminated oligoribonucleotides. In turn, RNase T2 degradation products promote the RNA-dependent activation of TLR8. In plasmacytoid dendritic cells, it cooperates with PLD3 or PLD4 5'-&gt;3' exonucleases to process RNA fragments and release 2',3'-cyclic guanosine monophosphate (2',3'-cGMP), a potent stimulatory ligand for TLR7. Also plays a key role in degradation of mitochondrial RNA and processing of non-coding RNA imported from the cytosol into mitochondria. Participates as well in degradation of mitochondrion-associated cytosolic rRNAs. This Sus scrofa (Pig) protein is Ribonuclease T2 (RNASET2).